A 403-amino-acid polypeptide reads, in one-letter code: L-lactate oxidase (403 aa).

An FMN hydroxy acid dehydrogenase domain is found at 21–375 (EGSVDFVNVF…KHFKLRHNPY (355 aa)). Tyr47 is a pyruvate binding site. FMN-binding positions include 99-101 (PVA), Ser128, and Gln150. Position 152 (Tyr152) interacts with pyruvate. Residue Thr178 coordinates FMN. Residues Arg187 and Tyr220 each coordinate pyruvate. FMN is bound at residue Lys246. Positions 270 and 273 each coordinate pyruvate. The Proton acceptor role is filled by His270. Residues 301–305 (DSGVR) and Arg325 contribute to the FMN site.

The protein belongs to the FMN-dependent alpha-hydroxy acid dehydrogenase family. In terms of assembly, homotetramer. Requires FMN as cofactor.

The catalysed reaction is (S)-lactate + O2 = pyruvate + H2O2. In terms of biological role, catalyzes the oxidation of (S)-lactate (L-lactate) to pyruvate, with a reduction of O2 to H2O2. Is likely involved in the L-lactate aerobic metabolism of S.iniae that enables the bacterium to utilize L-lactate as an energy source for growth under aerobic conditions in the absence (or at low concentrations) of glucose. The sequence is that of L-lactate oxidase from Streptococcus iniae (Streptococcus shiloi).